A 234-amino-acid polypeptide reads, in one-letter code: Small ribosomal subunit protein uS2 (234 aa).

Belongs to the universal ribosomal protein uS2 family.

The chain is Small ribosomal subunit protein uS2 from Clostridium kluyveri (strain NBRC 12016).